The following is a 196-amino-acid chain: Peroxisomal membrane protein 2 (196 aa).

The Cytoplasmic portion of the chain corresponds to methionine 1–arginine 30. A helical membrane pass occupies residues leucine 31 to leucine 51. The Peroxisomal portion of the chain corresponds to alanine 52 to tyrosine 76. The chain crosses the membrane as a helical span at residues alanine 77 to arginine 97. The Cytoplasmic portion of the chain corresponds to tryptophan 98–arginine 115. A helical membrane pass occupies residues leucine 116–glutamine 136. At aspartate 137–glutamine 174 the chain is on the peroxisomal side. The helical transmembrane segment at phenylalanine 175–lysine 196 threads the bilayer.

It belongs to the peroxisomal membrane protein PXMP2/4 family. Interacts with PEX19 and SIVA1.

The protein localises to the peroxisome membrane. Seems to be involved in pore-forming activity and may contribute to the unspecific permeability of the peroxisomal membrane. This chain is Peroxisomal membrane protein 2 (PXMP2), found in Bos taurus (Bovine).